A 449-amino-acid polypeptide reads, in one-letter code: Wilms tumor protein (449 aa).

The disordered stretch occupies residues 48–84 (YGSLGGPAPPPAPPPPPPPPPHSFIKQEPSWGGAEPH). Pro residues predominate over residues 54 to 69 (PAPPPAPPPPPPPPPH). Residues K73 and K177 each participate in a glycyl lysine isopeptide (Lys-Gly) (interchain with G-Cter in SUMO) cross-link. The short motif at 236 to 244 (MTWNQMNLG) is the 9aaTAD element. 3 C2H2-type zinc fingers span residues 323 to 347 (FMCA…SRKH), 353 to 377 (YQCD…QRRH), and 383 to 405 (FQCK…TRTH). 2 important for interaction with target DNA regions span residues 367 to 381 (SDQL…TGVK) and 393 to 401 (SRSDHLKTH). The short motif at 408 to 410 (KTS) is the KTS motif element. The C2H2-type 4 zinc finger occupies 414 to 438 (FSCRWPSCQKKFARSDELVRHHNMH). A Glycyl lysine isopeptide (Lys-Gly) (interchain with G-Cter in SUMO2) cross-link involves residue K444.

This sequence belongs to the EGR C2H2-type zinc-finger protein family. Homodimer. Interacts with WTIP. Interacts with actively translating polysomes. Detected in nuclear ribonucleoprotein (mRNP) particles. Interacts with HNRNPU via the zinc-finger region. Interacts with U2AF2. Interacts with CITED2. Interacts with ZNF224 via the zinc-finger region. Interacts with WTAP and SRY. Interacts with AMER1. Interacts with RBM4. In terms of tissue distribution, expressed in the kidney and a subset of hematopoietic cells.

The protein localises to the nucleus. It is found in the nucleolus. It localises to the cytoplasm. The protein resides in the nucleus speckle. Its subcellular location is the nucleoplasm. In terms of biological role, transcription factor that plays an important role in cellular development and cell survival. Recognizes and binds to the DNA sequence 5'-GCG(T/G)GGGCG-3'. Regulates the expression of numerous target genes, including EPO. Plays an essential role for development of the urogenital system. It has a tumor suppressor as well as an oncogenic role in tumor formation. Function may be isoform-specific: isoforms lacking the KTS motif may act as transcription factors. Isoforms containing the KTS motif may bind mRNA and play a role in mRNA metabolism or splicing. Isoform 1 has lower affinity for DNA, and can bind RNA. This chain is Wilms tumor protein (WT1), found in Homo sapiens (Human).